The following is a 219-amino-acid chain: Proteasome subunit beta type-9 (219 aa).

Residues 1 to 20 constitute a propeptide, removed in mature form; it reads MLQAGAPTAGSFRTGEVHTG. Catalysis depends on Thr21, which acts as the Nucleophile. N6-acetyllysine is present on residues Lys53 and Lys109.

It belongs to the peptidase T1B family. As to quaternary structure, the 26S proteasome consists of a 20S proteasome core and two 19S regulatory subunits. The 20S proteasome core is composed of 28 subunits that are arranged in four stacked rings, resulting in a barrel-shaped structure. The two end rings are each formed by seven alpha subunits, and the two central rings are each formed by seven beta subunits. The catalytic chamber with the active sites is on the inside of the barrel. Component of the immunoproteasome, where it displaces the equivalent housekeeping subunit PSMB6. Component of the spermatoproteasome, a form of the proteasome specifically found in testis. Interacts with NCOA2 and NCOA3. Post-translationally, autocleaved. The resulting N-terminal Thr residue of the mature subunit is responsible for the nucleophile proteolytic activity. In terms of tissue distribution, detected in the cytoplasmic lobe of elongated spermatids, in residual bodies, and in the acrosomal cap of round spermatids.

The protein resides in the cytoplasm. Its subcellular location is the nucleus. The catalysed reaction is Cleavage of peptide bonds with very broad specificity.. The proteasome is a multicatalytic proteinase complex which is characterized by its ability to cleave peptides with Arg, Phe, Tyr, Leu, and Glu adjacent to the leaving group at neutral or slightly basic pH. The proteasome has an ATP-dependent proteolytic activity. This subunit is involved in antigen processing to generate class I binding peptides. The chain is Proteasome subunit beta type-9 (Psmb9) from Rattus norvegicus (Rat).